The primary structure comprises 4239 residues: MSPMKQNESESHSVSEPIAIIGSAYRFPGGCNTPSKLWDLLRQPRDILKEIDPERLNLRRYYHPDGETHGSTDVANKAYTLEEDISRFDASFFGISPLEAASMDPQQRTLLEVVYESTETAGIPLDKLRGSLTSVHVGVMTTDWAQMQRRDPETMPQYTATGIASSIISNRISYIFDLKGASETIDTACSSSLVALHNAARALQSGDCEKAIVAGVNLILDPDPFIYESKLHMLSPDARSRMWDAAANGYARGEGAAAVVLKTLGHALRDGDRIEGVIRSTFVNSDGLSSGLTMPSSAAQTALIRQTYRKAGLDPVRDRPQFFECHGTGTKAGDPVEARAISDAFLPPSHRTNGAATTVDAPLYVGSIKTVVGHLEGCAGLAGLVKVLLSLKHGIIPPNLWFDKLNPEIARYYGPLQIPTKAIPWPKLAPGTPLRASVNSFGFGGTNAHAIIERYDASQSYCSQWRRNMTEEKTIARTQNNESIEIPVPLVLTAKTGRALWRTVDAYAQHLRQHPKLRVTNLSQFMHSRRSTHRVRASFSGASREELVENMAKFVQAHAADAKSPASQNRIGYSPLHIDPKEAPGILGVFTGQGAQWPAMGRDMMHQSPLFRKTIADCESVLQALPAKDAPVWSLSEELKKDASTSRLGEAEISQPLCTAVQLALVNVLLASGVHFDAVVGHSSGEIAATYASGIINLEAAMQIAYYRGLYAKLARGETDAAGGMMAAGLSMNDAVKLCRLPEFEGRIHVAASNAPQSVTLSGDKEAIKAAKAKLDADGVFARELKVDTAYHSHHMLPCAEPYLKALLACDIQVSAPTTTPGRKCMWSSSVRGDAELLRHDRNLDSLKGPYWVANMVQTVLFSRAVQSTIWHGGPFDLAVEVGPHPALKGPTEQTLKAVYGSAPLYTGVLSRGANDAVAFSTAIGNIWSHLGPAFVDITGYQSIFSSTCEGHGGGSAAPFISDLPLYPWDHDEEYWRESRISRRHRTGKDESHELLGRRTPDDNEREIRWRNLLKVSELPWTQGHRVLGEVLLPGAAYISMAIEAGRRLALDQGREARLLEVSDVDILRPVVVADNKEGTETLFTVRLLDEYASTGKKSDELITASFSFYIYNSPASTSIVHTCEGRIAVQLGAKLGSEAGANSMPQLPHREPSISNLQQLDCEKLYSVFETIGLEYSGAFRRIVSSSRCLGHATATASWPTTDLNDCYLIHPAILDVAFQTIFVARAHPDSGQLSSALLPSRIERVRVVPSLAMGSKLQNNENFNAAIDSWALNQTASSLTGNINVYDAESGRALIQVEGFEVRAVGEPDASKDRLLFYETVWGRDISIMGLSDPIRDETSDAMVHNLSEAIERVSLFYVRQLMGELSTADRRQANWYHTRMLAAFDYHLAKVHEETHLHLRPEWLADDWAVIQTIDEAYPDAVELQMLHAVGQNVADVIRGKKHLLEVLRVDNLLDRLYTEDKGMHMANLFLANALEEITFKFPRCKILEIGAGTGATTWAALSAIGEAFDTYTYTDLSVGFFENAVERFSAFRHRMVFRALDIEKDPASQSFDLNSYDIIIATNVLHATRNLGVTLGNVRALLKPGGYLLLNEKTGPESLRATFNFGGLEGWWLAEEKERQLSPLMSPDGWDAQLQKASFSGVDHIVHDVQEDQQDKQQNSMIMSQAVDDTFYARLSPLSEMANLLPMNEPLLIIGGQTTATLKMIKEIQKLLPRQWRHKVRLIASVDHVEAEGLPAHSDVICLQELDRGLFTTAMTSKCLDALKTLFINTRNLLWVTNAQNSSSMTPRASMFRGITRVLDGEVPHIRTQVLGIEPRETPSATARTLLEAFLRLRSDDGRHAGNVDEDGADGSSQQVLWLHEPEAELLSNGTMMVPRVKARKSLNDTYLASTRAISTTVDARCVSVQAVAGPAKMLLRPVEDFAGEHAISNQTSDSKVHIQVESTLHIPEALDGTCLYLVCGWTRTAETSVPVIALSANNASMVAVESKAVAMIDEVDVKPETLLRVFQHMAMQALDSAVKRHGQGQSTALIYGADEELAKLTSERFAVRESKVYFASSRTFAPGDWLKVQPLLSKFALSQMIPADVEVFIDCLGDTESFDACRTLQSCLSTTRTVQHRLDACLLSQMSRCSPDALVDAYSYAKTQSNAEFSWNGYVKTFTAAELAGKLSHSLIHSVYMTNWQKKDSILVTVPPLQTRGLFKSDRTYLMVGAAGGLGTSICRWMVRNGARHVVVTSRNPKADPEMLNEAERYGAAVQVVPMDACSKDSVQTVVDMIRATMPPIAGVCNAAMVLRDKLFLDMNVDHMKDVLGPKMQGTEHLDSIFAQEPLDFFVLLSSSAAILNNTGQSNYHCANLYMDSLVTNRRSRGLAASIIHVGHVCDTGYVARLVDDTKVQMSLGTTRVMSVSETDVHHAFAEAVRGGQPDSRSGSHNIIMGIEPPTKPLDLTKRKPVWISDPRLGPCLPFSTLENQMMASEQAAAASAVDSLAQQVSEATTDEEAAVAALKGFATKLEGILLLPLGSIGEDSAGRPVTDLGIDSLVAVEIRTWFLKQLRVDVPVMKILGGSTVGQLSALAAKLARQDAKKRAQLEEPSGNQPVALPSPPPKDKAGGLNKNGKSPKLPEIAQVDTVVERMEPLVLEASDRGGSSTANLTTSSSVSELDDSLHESTLQSSDNNGESTPSKSSNCNSDSGSDNQAPKEIPSNGFFTQPAATARPNVLREAPMSPAQSRIWFLSKHIAEPDAYNMVFHYRVRGPLSMVRLRHALQTVTNHHECLCMCFYASADNGQPMQGLLASSAFQMTHVPGGEEQDVQRELRKLKTRVWSVESGQTLELVVLGPRPGTAAAAEEEEEEFSLLFGYHHIVMDAISFYIFLADLDKAYRMLPLDKASAGSHLDLAAHQRQQERAGAWEESLEFWRAEFETIPEMLPSLSVALPTLHRGAVGTHRVLRELAHEQGGDAAIKKMCKHLRVSPFNLHIAVLQVVIARLASIEDVCVGIVDANRSDSRASRMVGCFVNMLPVRSRILPTATLADVARAASSKALAAFAHGQVPLDSILDKVKAPRPAGSTPLFQVALNYRPAAAIASKQALGGECEMELLADDFKDAENPFEISVLVSEMSGGRIAVEVVCQKSRYTMQATEALLDAYLNVLAGFLSDSAQSVGDCVVHDQSKVEHALDLGRGAQKSFGWPRTLSERVMSICQQHSTKSAIKDGRNELSYAQLASRVNRTASAILGTGCSVGSRIAVLCNPSIDAIVAMLAILHIGGVYVPLDTSLPEARHQSLASNCTPSLIISHAATRERAHKLSAAISAPGHEPARELTLDDLSPPEETGYMAPLNAEPNAPAILLYTSGSTGTPKGVLLTQANFGNHIALKTDILGLQRGECVLQQSSLGFDMSLVQVFCALANGGCLVIVRQDVRRDPVELTTLMTQHKVSLTIATPSEYLAWLQYGSDALAQATSWKNLCMGGEPIPPLLKDELRRRLERKDLVVTNCYGPTETTAAISFQSVALDSEHGHELPGESELAQYAVGKALPNYSIRIRDSAGGAWLPVNHTGEIVIGGAGVALGYLDMPEETRARFLQTPGEEDGMMLYRTGDKGRLLSDGTLLCFGRITGDYQVKLRGLRIELGEVEAALLQASHGLIHTAVVSRRGDVLVAHCARSHESSRETTGGGEQQDATAILRRVSELLPQYSVPAAIALLPSLPTNANGKLDRKAIAALPLSPQDEAAAATSPSNNNINNNTPSGGGGEKMTVRQGELRLLWERVLPRDAATTTTNSVRITPESDFFLRGGNSLLLMKLQAAIRESMGVRVSTKALYQASTLSGMARCVAEQRSDDDEAEEDIDWAAEVAVPPSMLAQIEKLQHSSASSSSSSSSSSSAGSSSTQRPRKTSGLEILLTGATGFLGGQLLERLVQSPRVSTVHCVAVPVDEQSLLEPFLQQQADGTRRKVRCYIGNLAAPALGLTAADQTALSQTADVIVHAGSMGHCLNTYATLAAPNFASTRHLCSLALSRSPPIPLAFASSNRVALLTGSTAPPPASAAAFPPPPGAQGFTASKWASEAFLEKLAASIMTSKTKSTTTTTTTTVPWRVSIHRPCALISDRAPNSDALNAILRYSTSMRCVPSLPEHRAEGYLDFGQVDKVVEEMVGDILGLADERQQEGPAVVYRHHSGGVKVPIHEFREHMESVYGGRFESVELGQWIVRAVDAGMDPLISAYLETFLEGDASMVFPYMGEQAV.

In terms of domain architecture, Ketosynthase family 3 (KS3) spans 15–454 (SEPIAIIGSA…GTNAHAIIER (440 aa)). Active-site for beta-ketoacyl synthase activity residues include Cys189, His326, and His374. Positions 589–923 (VFTGQGAQWP…ANDAVAFSTA (335 aa)) are malonyl-CoA:ACP transacylase (MAT) domain. An N-terminal hotdog fold region spans residues 993 to 1135 (HELLGRRTPD…GRIAVQLGAK (143 aa)). The segment at 993-1310 (HELLGRRTPD…GFEVRAVGEP (318 aa)) is dehydratase (DH) domain. The 321-residue stretch at 993–1313 (HELLGRRTPD…VRAVGEPDAS (321 aa)) folds into the PKS/mFAS DH domain. Residue His1025 is the Proton acceptor; for dehydratase activity of the active site. Residues 1158 to 1313 (LQQLDCEKLY…VRAVGEPDAS (156 aa)) are C-terminal hotdog fold. Catalysis depends on Asp1217, which acts as the Proton donor; for dehydratase activity. Positions 1459–1652 (RLYTEDKGMH…FSGVDHIVHD (194 aa)) are methyltransferase (MT) domain. The tract at residues 2209–2382 (TYLMVGAAGG…AASIIHVGHV (174 aa)) is ketoreductase (KR) domain. Residues 2502–2582 (EAAVAALKGF…QLSALAAKLA (81 aa)) enclose the Carrier 1 domain. At Ser2542 the chain carries O-(pantetheine 4'-phosphoryl)serine. 2 disordered regions span residues 2587 to 2629 (KKRA…EIAQ) and 2642 to 2712 (LEAS…FFTQ). 2 stretches are compositionally biased toward polar residues: residues 2648 to 2662 (GGSS…SSVS) and 2670 to 2681 (ESTLQSSDNNGE). Residues 2682 to 2698 (STPSKSSNCNSDSGSDN) show a composition bias toward low complexity. The tract at residues 2723 to 3169 (REAPMSPAQS…SAQSVGDCVV (447 aa)) is condensation (C) domain. Residues 3203–3614 (CQQHSTKSAI…DGTLLCFGRI (412 aa)) form an adenylation (A) (KR) domain region. The tract at residues 3728-3752 (EAAAATSPSNNNINNNTPSGGGGEK) is disordered. A compositionally biased stretch (low complexity) spans 3729–3745 (AAAATSPSNNNINNNTP). Residues 3751–3835 (EKMTVRQGEL…GMARCVAEQR (85 aa)) form the Carrier 2 domain. Ser3795 carries the post-translational modification O-(pantetheine 4'-phosphoryl)serine. Positions 3862–3892 (EKLQHSSASSSSSSSSSSSAGSSSTQRPRKT) are disordered. Low complexity predominate over residues 3867–3885 (SSASSSSSSSSSSSAGSSS). Residues 3899–4145 (LTGATGFLGG…LDFGQVDKVV (247 aa)) are reductase (RED) domain.

This sequence in the C-terminal section; belongs to the NRP synthetase family.

Its pathway is secondary metabolite biosynthesis. In terms of biological role, hybrid PKS-NRPS synthetase; part of the gene cluster that mediates the biosynthesis of tenellin-type 2-pyridones, iron-chelating compounds involved in iron stress tolerance, competition with the natural competitor fungus Metarhizium robertsii and insect hosts infection. TenS catalyzes the assembly of the polyketide-amino acid backbone. Because tenS lacks a designated enoylreductase (ER) domain, the required activity is provided the enoyl reductase tenC. Upon formation of the polyketide backbone on the thiotemplate, the triketide is transferred to the NRPS module and linked to tyrosine to produce the pyrrolidine-2-dione intermediates, including pretellinin A, 11-hydropretellenin A, 12-hydropretellenin A, 13-hydropretellenin A, 14-hydropretellenin A, 12-oxopretellenin A and prototellinin D. The pathway begins with the assembly of the polyketide-amino acid backbone by the hybrid PKS-NRPS tenS with the help of the enoyl reductase tenC. These enzymes catalyze the synthesis of the pyrrolidine-2-dione intermediates pretellinin A, 11-hydropretellenin A, 12-hydropretellenin A, 13-hydropretellenin A, 14-hydropretellenin A, 12-oxopretellenin A and prototellinin D. The cytochrome P450 monooxygenase tenA then catalyzes an oxidative ring expansion of pretenellin A and 14-hydropretellenin A to form the 2-pyridone core, leading to pretenellin B and pyridovericin, respectively. The cytochrome P450 monooxygenase tenB is then required for the selective N-hydroxylation of the 2-pyridone nitrogen of yield tellinin and 15-hydroxytellenin (15-HT), respectively. The UDP-glucosyltransferase GT1 and the methyltransferase MT1, located outside the tenS gene cluster, contribute to the stepwise glycosylation and methylation of 15-HT to obtain the glycoside pyridovericin-N-O-(4-O-methyl-beta-D-glucopyranoside) (PMGP). Additional related compounds such as 1-O-methyl-15-HT, (8Z)-1-O-methyl-15-HT, and O-methyltenellin A are also produced but the enzymes involved in their biosynthesis have still to be determined. This is Tenellin synthetase from Beauveria bassiana (White muscardine disease fungus).